The sequence spans 423 residues: ATP-dependent Clp protease ATP-binding subunit ClpX (423 aa).

The ClpX-type ZB domain occupies 1 to 50; sequence MTDDTEYRCSFCGKEHHQVDDLIAGPDVRICSECVVLSCEIVEDRRNEAL. Residues C9, C12, C31, and C34 each coordinate Zn(2+). 126 to 133 contributes to the ATP binding site; the sequence is PTGCGKTY.

The protein belongs to the ClpX chaperone family. Component of the ClpX-ClpP complex. Forms a hexameric ring that, in the presence of ATP, binds to fourteen ClpP subunits assembled into a disk-like structure with a central cavity, resembling the structure of eukaryotic proteasomes.

In terms of biological role, ATP-dependent specificity component of the Clp protease. It directs the protease to specific substrates. Can perform chaperone functions in the absence of ClpP. The sequence is that of ATP-dependent Clp protease ATP-binding subunit ClpX from Tropheryma whipplei (strain Twist) (Whipple's bacillus).